A 202-amino-acid chain; its full sequence is Amelogenin (202 aa).

Residue S16 is modified to Phosphoserine. The disordered stretch occupies residues 77–202; sequence QPAPPQQPVM…TDKTKREEVD (126 aa). The segment covering 78–87 has biased composition (pro residues); sequence PAPPQQPVMP. Low complexity predominate over residues 101–112; that stretch reads QPNLPQPGQQPY. The segment covering 113–125 has biased composition (pro residues); it reads QPQPAQQPQPHQP. Low complexity predominate over residues 126 to 158; the sequence is IQPIQPIQPIQPMQPMQPMQPMQPMQPMQPQTP. The segment covering 164–176 has biased composition (pro residues); the sequence is PLPPQPPLPPMFP.

Belongs to the amelogenin family.

It is found in the secreted. It localises to the extracellular space. The protein resides in the extracellular matrix. Its function is as follows. Plays a role in the biomineralization of teeth. Seems to regulate the formation of crystallites during the secretory stage of tooth enamel development. Thought to play a major role in the structural organization and mineralization of developing enamel. This is Amelogenin (AMEL) from Monodelphis domestica (Gray short-tailed opossum).